A 693-amino-acid polypeptide reads, in one-letter code: Transcription activator of gluconeogenesis BC1G_14637 (693 aa).

Positions 1–12 are enriched in acidic residues; it reads MSGETEIDDPEV. The disordered stretch occupies residues 1–75; the sequence is MSGETEIDDP…KFDPKDPLRP (75 aa). A compositionally biased stretch (basic and acidic residues) spans 21–49; it reads YSDHEQELDVIGKEGDNQEMAEQKVRPDG. The span at 52–62 shows a compositional bias: polar residues; that stretch reads NGNTVGATATV. Basic and acidic residues predominate over residues 65–74; sequence PKFDPKDPLR. The segment at residues 84-112 is a DNA-binding region (zn(2)-C6 fungal-type); it reads CFACQRAHLTCGDERPCQRCIKRGLADAC. Polar residues-rich tracts occupy residues 144–155 and 275–287; these read SSNRATAASTPT and SAET…SAGM. Disordered stretches follow at residues 144 to 170, 273 to 299, 350 to 413, and 531 to 567; these read SSNR…QPDT, SGSA…FSNN, TSGS…RNRD, and NLNT…DSNP. The segment covering 356 to 367 has biased composition (low complexity); it reads SPSTDASPAAST. Polar residues predominate over residues 369–379; the sequence is GFESSPTTTNY. Residues 394-408 are compositionally biased toward low complexity; sequence KSGPSGKLGPSGILG.

This sequence belongs to the ERT1/acuK family.

It is found in the nucleus. Transcription factor which regulates nonfermentable carbon utilization. Activator of gluconeogenetic genes. The protein is Transcription activator of gluconeogenesis BC1G_14637 of Botryotinia fuckeliana (strain B05.10) (Noble rot fungus).